Here is a 271-residue protein sequence, read N- to C-terminus: Protein phosphatase 1 regulatory subunit 3B-B (271 aa).

Residues 56–59 carry the PP1-binding motif motif; it reads RVSF. The 109-residue stretch at 119-227 folds into the CBM21 domain; the sequence is RNRLKADSVC…SNKGLNYRIV (109 aa).

Interacts with glycogen, PPP1CC catalytic subunit of PP1 and PYGL. Associates with glycogen particles. Forms complexes with debranching enzyme, glycogen phosphorylase, glycogen synthase and phosphorylase kinase which is necessary for its regulation of PP1 activity.

Acts as a glycogen-targeting subunit for phosphatase PP1. Facilitates interaction of the PP1 with enzymes of the glycogen metabolism and regulates its activity. Suppresses the rate at which PP1 dephosphorylates (inactivates) glycogen phosphorylase and enhances the rate at which it activates glycogen synthase and therefore limits glycogen breakdown. This chain is Protein phosphatase 1 regulatory subunit 3B-B (ppp1r3b-b), found in Xenopus laevis (African clawed frog).